The chain runs to 380 residues: Queuine tRNA-ribosyltransferase (380 aa).

Catalysis depends on aspartate 96, which acts as the Proton acceptor. Substrate contacts are provided by residues 96-100 (DSGGF), aspartate 150, glutamine 193, and glycine 220. Residues 251–257 (GVGAPDS) are RNA binding. The active-site Nucleophile is aspartate 270. Positions 275–279 (TRIAR) are RNA binding; important for wobble base 34 recognition. Residues cysteine 308, cysteine 310, cysteine 313, and histidine 339 each contribute to the Zn(2+) site.

Belongs to the queuine tRNA-ribosyltransferase family. Homodimer. Within each dimer, one monomer is responsible for RNA recognition and catalysis, while the other monomer binds to the replacement base PreQ1. Requires Zn(2+) as cofactor.

The enzyme catalyses 7-aminomethyl-7-carbaguanine + guanosine(34) in tRNA = 7-aminomethyl-7-carbaguanosine(34) in tRNA + guanine. The protein operates within tRNA modification; tRNA-queuosine biosynthesis. Catalyzes the base-exchange of a guanine (G) residue with the queuine precursor 7-aminomethyl-7-deazaguanine (PreQ1) at position 34 (anticodon wobble position) in tRNAs with GU(N) anticodons (tRNA-Asp, -Asn, -His and -Tyr). Catalysis occurs through a double-displacement mechanism. The nucleophile active site attacks the C1' of nucleotide 34 to detach the guanine base from the RNA, forming a covalent enzyme-RNA intermediate. The proton acceptor active site deprotonates the incoming PreQ1, allowing a nucleophilic attack on the C1' of the ribose to form the product. After dissociation, two additional enzymatic reactions on the tRNA convert PreQ1 to queuine (Q), resulting in the hypermodified nucleoside queuosine (7-(((4,5-cis-dihydroxy-2-cyclopenten-1-yl)amino)methyl)-7-deazaguanosine). The chain is Queuine tRNA-ribosyltransferase from Streptococcus thermophilus (strain ATCC BAA-491 / LMD-9).